The primary structure comprises 368 residues: UDP-N-acetylglucosamine--N-acetylmuramyl-(pentapeptide) pyrophosphoryl-undecaprenol N-acetylglucosamine transferase (368 aa).

UDP-N-acetyl-alpha-D-glucosamine contacts are provided by residues 13–15 (TGG), asparagine 124, arginine 167, serine 195, and glutamine 296.

Belongs to the glycosyltransferase 28 family. MurG subfamily.

Its subcellular location is the cell inner membrane. It catalyses the reaction di-trans,octa-cis-undecaprenyl diphospho-N-acetyl-alpha-D-muramoyl-L-alanyl-D-glutamyl-meso-2,6-diaminopimeloyl-D-alanyl-D-alanine + UDP-N-acetyl-alpha-D-glucosamine = di-trans,octa-cis-undecaprenyl diphospho-[N-acetyl-alpha-D-glucosaminyl-(1-&gt;4)]-N-acetyl-alpha-D-muramoyl-L-alanyl-D-glutamyl-meso-2,6-diaminopimeloyl-D-alanyl-D-alanine + UDP + H(+). Its pathway is cell wall biogenesis; peptidoglycan biosynthesis. Cell wall formation. Catalyzes the transfer of a GlcNAc subunit on undecaprenyl-pyrophosphoryl-MurNAc-pentapeptide (lipid intermediate I) to form undecaprenyl-pyrophosphoryl-MurNAc-(pentapeptide)GlcNAc (lipid intermediate II). The sequence is that of UDP-N-acetylglucosamine--N-acetylmuramyl-(pentapeptide) pyrophosphoryl-undecaprenol N-acetylglucosamine transferase from Maricaulis maris (strain MCS10) (Caulobacter maris).